The following is a 482-amino-acid chain: ATP synthase subunit beta (482 aa).

161 to 168 (GGAGVGKT) serves as a coordination point for ATP.

This sequence belongs to the ATPase alpha/beta chains family. As to quaternary structure, F-type ATPases have 2 components, CF(1) - the catalytic core - and CF(0) - the membrane proton channel. CF(1) has five subunits: alpha(3), beta(3), gamma(1), delta(1), epsilon(1). CF(0) has four main subunits: a(1), b(1), b'(1) and c(9-12).

The protein localises to the cellular thylakoid membrane. The enzyme catalyses ATP + H2O + 4 H(+)(in) = ADP + phosphate + 5 H(+)(out). Functionally, produces ATP from ADP in the presence of a proton gradient across the membrane. The catalytic sites are hosted primarily by the beta subunits. This chain is ATP synthase subunit beta, found in Gloeothece citriformis (strain PCC 7424) (Cyanothece sp. (strain PCC 7424)).